We begin with the raw amino-acid sequence, 739 residues long: Nucleoprotein (739 aa).

The tract at residues 1–25 (MDSRPQKIWMAPSLTESDMDYHKIL) is oligomerization, N-terminal arm. Residues 26–405 (TAGLSVQQGI…TLRKERLAKL (380 aa)) are NP core. The disordered stretch occupies residues 415–647 (PKTSGHYDDD…DSDNTQSEHS (233 aa)). 2 stretches are compositionally biased toward low complexity: residues 449–458 (SQDTTIPDVV) and 504–514 (KGGQQKNSQKG). Residues 562–567 (LTPINE) carry the Host PPP2R5C-binding motif motif. Positions 567–579 (EEADPLDDADDET) are enriched in acidic residues. The short motif at 606–611 (PPAPVY) is the VP30-binding motif element. Positions 611-638 (YRDHSEKKELPQDEQQDQDHTQEARNQD) are enriched in basic and acidic residues.

It belongs to the filoviruses nucleoprotein family. Homooligomer. Homomultimerizes to form the nucleocapsid. Binds to viral genomic RNA. Interacts with VP35 and VP30 to form the nucleocapsid. Interacts with host PPP2R5C; this interaction leads to VP30 dephosphorylation and viral transcription. Interacts with VP24; this interaction facilitates nucleocapsid assembly and genome packaging. Interacts with matrix protein VP40; this interaction allows recruitment of the nucleocapsid into progeny virions. Interacts with host STAU1. Interacts with host NXF1 (via RNA-binding domain); this interaction recruits NXF1 to the inclusion bodies were viral replication takes place, probably to export viral mRNA-NXF1 complexes from these sites. Interacts with host CCDC92; this interaction sequesters NP in the host cytoplasm. Interacts with host TRIM14. In terms of processing, phosphorylated by host. O-glycosylated by host. Post-translationally, acetylated by host EP300 in vitro.

The protein resides in the virion. It is found in the host cytoplasm. Functionally, oligomerizes into helical capsid to encapsidate the viral genome, protecting it from nucleases and the cellular innate immune response. VP35 binds to and stabilizes monomeric NP, keeping it soluble. Upon virus replication, NP is recruited to bind cooperatively viral genomic RNA and VP35 is released. The encapsidated genomic RNA is termed the nucleocapsid and serves as template for transcription and replication. The nucleocapsid is helical with a pitch of 10.81 NP per turn and a diameter of about 22nm. Each NP binds to six nucleotides of viral genomic RNA, three being exposed to the solvant and three hidden into the nucleocapsid. Also recruits host PPP2R5C phosphatase to dephosphorylate VP30 and thereby promote viral transcription. Upon virion assembly and budding, NP binds to VP24 and possibly host STAU1. This is Nucleoprotein (NP) from Epomops franqueti (Franquet's epauletted fruit bat).